The chain runs to 161 residues: Putative acetyltransferase SAV0762 (161 aa).

It belongs to the transferase hexapeptide repeat family.

The chain is Putative acetyltransferase SAV0762 from Staphylococcus aureus (strain Mu50 / ATCC 700699).